Consider the following 807-residue polypeptide: Probable phosphoketolase (807 aa).

It belongs to the XFP family. Thiamine diphosphate serves as cofactor.

This chain is Probable phosphoketolase, found in Mesorhizobium japonicum (strain LMG 29417 / CECT 9101 / MAFF 303099) (Mesorhizobium loti (strain MAFF 303099)).